The following is a 214-amino-acid chain: Probable adenylyl-sulfate kinase (214 aa).

13–20 lines the ATP pocket; it reads GLSGAGKT. The active-site Phosphoserine intermediate is Ser-87. Positions 174–199 are disordered; it reads WNRTNTFPLKSRPNPPHRHKSKSSRA.

Belongs to the APS kinase family.

It carries out the reaction adenosine 5'-phosphosulfate + ATP = 3'-phosphoadenylyl sulfate + ADP + H(+). It functions in the pathway sulfur metabolism; hydrogen sulfide biosynthesis; sulfite from sulfate: step 2/3. Catalyzes the synthesis of activated sulfate. This is Probable adenylyl-sulfate kinase from Pseudomonas aeruginosa.